The sequence spans 445 residues: Eukaryotic peptide chain release factor subunit 1 (445 aa).

It belongs to the eukaryotic release factor 1 family. Heterodimer of two subunits, one of which binds GTP.

It is found in the cytoplasm. Functionally, directs the termination of nascent peptide synthesis (translation) in response to the termination codon UGA. In Stylonchia UAA and UAG codes for glutamine. The chain is Eukaryotic peptide chain release factor subunit 1 (ERF1) from Stylonychia mytilus (Ciliate).